The chain runs to 528 residues: Peptide chain release factor 3 (528 aa).

The region spanning 10-278 is the tr-type G domain; that stretch reads DKRRTFGIIS…TFVDLAPAPQ (269 aa). Residues 19-26, 87-91, and 141-144 each bind GTP; these read SHPDAGKT, DTPGH, and NKLD.

The protein belongs to the TRAFAC class translation factor GTPase superfamily. Classic translation factor GTPase family. PrfC subfamily.

The protein localises to the cytoplasm. In terms of biological role, increases the formation of ribosomal termination complexes and stimulates activities of RF-1 and RF-2. It binds guanine nucleotides and has strong preference for UGA stop codons. It may interact directly with the ribosome. The stimulation of RF-1 and RF-2 is significantly reduced by GTP and GDP, but not by GMP. This Oleidesulfovibrio alaskensis (strain ATCC BAA-1058 / DSM 17464 / G20) (Desulfovibrio alaskensis) protein is Peptide chain release factor 3.